The primary structure comprises 454 residues: Transcription factor efuD (454 aa).

Positions 4-111 (AKELIRITAR…NYHRAIDSIK (108 aa)) constitute an HTH TFE/IIEalpha-type domain. Residues 327–454 (LRTDDDGAMD…DEDELEFEDI (128 aa)) are disordered. Positions 353–372 (DQDEEEEEEDDDDDEFEDVD) are enriched in acidic residues. Residues 387-401 (SVSTPATSAQVSSTA) show a composition bias toward polar residues. Residues 423–437 (APAAAASSQAAAAES) are compositionally biased toward low complexity. Positions 442-454 (SDEDEDELEFEDI) are enriched in acidic residues.

It belongs to the TFIIE alpha subunit family.

It is found in the nucleus. Transcription factor; part of the gene cluster that mediates the biosynthesis of enfumafungin, a glycosylated fernene-type triterpenoid with potent antifungal activity, mediated by its interaction with beta-1,3-glucan synthase and the fungal cell wall. Is possibly responsible for the transcription regulation of one or more genes within the gene cluster. In Hormonema carpetanum, this protein is Transcription factor efuD.